Reading from the N-terminus, the 969-residue chain is Protein translocase subunit SecA (969 aa).

Residues glutamine 99, 117 to 121 (GEGKT), and aspartate 631 contribute to the ATP site.

It belongs to the SecA family. Monomer and homodimer. Part of the essential Sec protein translocation apparatus which comprises SecA, SecYEG and auxiliary proteins SecDF. Other proteins may also be involved.

The protein resides in the cell inner membrane. The protein localises to the cytoplasm. It carries out the reaction ATP + H2O + cellular proteinSide 1 = ADP + phosphate + cellular proteinSide 2.. In terms of biological role, part of the Sec protein translocase complex. Interacts with the SecYEG preprotein conducting channel. Has a central role in coupling the hydrolysis of ATP to the transfer of proteins into and across the cell membrane, serving as an ATP-driven molecular motor driving the stepwise translocation of polypeptide chains across the membrane. This is Protein translocase subunit SecA from Chlamydia trachomatis serovar A (strain ATCC VR-571B / DSM 19440 / HAR-13).